Here is a 42-residue protein sequence, read N- to C-terminus: Cytochrome b559 subunit beta (42 aa).

Residues 17 to 33 (WLAIHAIGIPAVFFIGS) form a helical membrane-spanning segment. His-21 lines the heme pocket.

Belongs to the PsbE/PsbF family. Heterodimer of an alpha subunit and a beta subunit. PSII is composed of 1 copy each of membrane proteins PsbA, PsbB, PsbC, PsbD, PsbE, PsbF, PsbH, PsbI, PsbJ, PsbK, PsbL, PsbM, PsbT, PsbX, PsbY, PsbZ, Psb30/Ycf12, at least 3 peripheral proteins of the oxygen-evolving complex and a large number of cofactors. It forms dimeric complexes. Heme b serves as cofactor.

It localises to the plastid. Its subcellular location is the cyanelle thylakoid membrane. In terms of biological role, this b-type cytochrome is tightly associated with the reaction center of photosystem II (PSII). PSII is a light-driven water:plastoquinone oxidoreductase that uses light energy to abstract electrons from H(2)O, generating O(2) and a proton gradient subsequently used for ATP formation. It consists of a core antenna complex that captures photons, and an electron transfer chain that converts photonic excitation into a charge separation. The sequence is that of Cytochrome b559 subunit beta from Cyanophora paradoxa.